Reading from the N-terminus, the 302-residue chain is Myeloid-associated differentiation marker-like protein 2 (302 aa).

MARVEL domains lie at 13–149 (AIWS…AKPG) and 154–298 (YMAT…RLRI). The next 7 membrane-spanning stretches (helical) occupy residues 45-65 (AYGTFCVFVWAFCFALTILIV), 87-107 (AYAMLATLMTLTAAVIYPMYF), 124-144 (LAVSVCAALLFVTYAVEVFLT), 158-178 (ASGLLKVVQAFVACVIFGALA), 191-211 (WCVAVYSFCFGVTMVVVILNI), 225-245 (FVVIYTVLAILMYISAAVIWP), and 273-293 (LAVTIFTHINLILYIADLIYT).

It belongs to the MAL family.

It is found in the membrane. The chain is Myeloid-associated differentiation marker-like protein 2 (myadml2) from Xenopus laevis (African clawed frog).